Reading from the N-terminus, the 844-residue chain is Prickle-like protein 2 (844 aa).

A PET domain is found at 18 to 126 (FDFQRNSTSD…NVRPFPVTMT (109 aa)). Position 92 is a phosphoserine (serine 92). LIM zinc-binding domains are found at residues 128–193 (AICE…CLKP), 193–253 (PRCA…LYAE), and 253–317 (EYCD…EDPN). Disordered stretches follow at residues 314–350 (EDPN…TEEP) and 481–519 (ESYS…QQCR). Positions 318–327 (GSDSSDSAFQ) are enriched in polar residues. Serine 319, serine 321, and serine 322 each carry phosphoserine. Over residues 481-493 (ESYSDMSSQSFSE) the composition is skewed to low complexity. A phosphothreonine mark is found at threonine 534, threonine 536, and threonine 539. Phosphoserine is present on residues serine 543, serine 546, serine 607, and serine 642. Residues 639 to 709 (MHQSFDFDGG…HLASEREAIS (71 aa)) are disordered. Residues 682–692 (FRPHRSRRSRR) are compositionally biased toward basic residues. The span at 693-709 (SRSDNALHLASEREAIS) shows a compositional bias: basic and acidic residues. Position 731 is a phosphoserine (serine 731). Residues 822–844 (STLGGRGQLHSRKRQKSKNCIIS) are disordered. Cysteine methyl ester is present on cysteine 841. Cysteine 841 carries S-farnesyl cysteine lipidation. A propeptide spans 842–844 (IIS) (removed in mature form).

The protein belongs to the prickle / espinas / testin family. In terms of tissue distribution, expressed in brain, eye and testis. Additionally in fetal brain, adult cartilage, pancreatic islet, gastric cancer and uterus tumors.

It is found in the nucleus membrane. The chain is Prickle-like protein 2 (PRICKLE2) from Homo sapiens (Human).